Consider the following 306-residue polypeptide: Ornithine carbamoyltransferase, anabolic (306 aa).

Residues 46–49, Gln-73, Arg-97, and 124–127 each bind carbamoyl phosphate; these read STRT and HPTQ. Residues Asn-156, Asp-220, and 224 to 225 contribute to the L-ornithine site; that span reads SM. Carbamoyl phosphate is bound by residues 260-261 and Arg-288; that span reads CL.

It belongs to the aspartate/ornithine carbamoyltransferase superfamily. OTCase family. As to quaternary structure, homohexamer; dimer of trimers.

The protein resides in the cytoplasm. It carries out the reaction carbamoyl phosphate + L-ornithine = L-citrulline + phosphate + H(+). The protein operates within amino-acid biosynthesis; L-arginine biosynthesis; L-arginine from L-ornithine and carbamoyl phosphate: step 1/3. Functionally, reversibly catalyzes the transfer of the carbamoyl group from carbamoyl phosphate (CP) to the N(epsilon) atom of ornithine (ORN) to produce L-citrulline, which is a substrate for argininosuccinate synthetase (ArgG) involved in the final step in arginine biosynthesis. This Campylobacter jejuni subsp. jejuni serotype O:2 (strain ATCC 700819 / NCTC 11168) protein is Ornithine carbamoyltransferase, anabolic.